The primary structure comprises 639 residues: MAAGGAAGLREEQRYGLACGRLGQDNITVLHVKLTETAIRALETYQSHKNLIPFRPSIQFQGLQGLMKIPKNDPFNEVQNFNFYLSNVGRDNPQGSFDCIQQTLSSSGASQLNCLGFIQDKITVCATNDSYQMTRERMTQAEEESRNRSTKVIKPGGPYVGKRVQIRKAPQAISDTVPERKRSTPMNPANTIRKMHSGNSVSQRPYRDRVIHLLALKAYKKPELLARLQKDGVNQKDKNSLGAILQQVANLNPKDLSYTLKDYVFKELQRDWPGYSETDRQTLDLVLSRKLNPSQNASTSRSESPLCSSKDAASSPQKRPLDSDFIDPLMNKKARISHLTNRVPPTLNGYLNPTSEKSCAGLLPPPAAAAIPTLSPLPSTHLPVSNPPQTVNSNSNSPSTPEGLGTQDLPVDSFSQNGSIFEDQQEKYTSRTCLETLPPSSALLKCPKPMEEEHPVSHKKSKKKSKKHKEKDQIKKLDIETMEEKEEDLQREETAKLSNASPNPNEGVKEGCTASMEPSSALELPDYLIKYIAIVSYEQRQNYKDDFNAEYDEYRALHARMETVARRFIKLDAQRKRLSPGSKEYQNVHEEVLQEYQKIKQSSPNYHEEKYRCEYLHNKLAHIKRLIGEFDQQQAESWH.

Disordered regions lie at residues D175–Q203, L291–I326, P378–Q416, and P439–T513. Over residues L291 to Q317 the composition is skewed to polar residues. A compositionally biased stretch (low complexity) spans P378–P401. Residues S457–K469 show a composition bias toward basic residues. The segment covering E470 to I479 has biased composition (basic and acidic residues). A compositionally biased stretch (acidic residues) spans E480–Q490. S501 and S579 each carry phosphoserine. In terms of domain architecture, OCEL spans P525 to A635.

The protein belongs to the ELL/occludin family. Component of the super elongation complex (SEC), at least composed of EAF1, EAF2, CDK9, MLLT3/AF9, AFF (AFF1 or AFF4), the P-TEFb complex and ELL (ELL, ELL2 or ELL3). Component of the little elongation complex (LEC), at least composed of ELL (ELL, ELL2 or ELL3), ZC3H8, ICE1 and ICE2. Interacts with AFF4; the interaction is direct and leads to stabilize ELL2 and prevent ELL2 ubiquitination. Interacts with EAF1 and EAF2. Ubiquitinated by SIAH1, leading to its degradation by the proteasome. Interaction with AFF4 stabilizes ELL2 and prevents ELL2 ubiquitination.

It is found in the nucleus. In terms of biological role, elongation factor component of the super elongation complex (SEC), a complex required to increase the catalytic rate of RNA polymerase II transcription by suppressing transient pausing by the polymerase at multiple sites along the DNA. Component of the little elongation complex (LEC), a complex required to regulate small nuclear RNA (snRNA) gene transcription by RNA polymerase II and III. Plays a role in immunoglobulin secretion in plasma cells: directs efficient alternative mRNA processing, influencing both proximal poly(A) site choice and exon skipping, as well as immunoglobulin heavy chain (IgH) alternative processing. Probably acts by regulating histone modifications accompanying transition from membrane-specific to secretory IgH mRNA expression. The protein is RNA polymerase II elongation factor ELL2 (Ell2) of Mus musculus (Mouse).